Here is a 136-residue protein sequence, read N- to C-terminus: ATP synthase epsilon chain (136 aa).

It belongs to the ATPase epsilon chain family. As to quaternary structure, F-type ATPases have 2 components, CF(1) - the catalytic core - and CF(0) - the membrane proton channel. CF(1) has five subunits: alpha(3), beta(3), gamma(1), delta(1), epsilon(1). CF(0) has three main subunits: a, b and c.

The protein resides in the cell membrane. Produces ATP from ADP in the presence of a proton gradient across the membrane. This is ATP synthase epsilon chain from Ureaplasma parvum serovar 3 (strain ATCC 27815 / 27 / NCTC 11736).